A 613-amino-acid polypeptide reads, in one-letter code: Coiled-coil domain-containing protein 116 (613 aa).

Residues 41 to 68 are disordered; sequence KPGRVPHPPSTCGSSALQGQRRNKRHPQ. The segment covering 51–60 has biased composition (polar residues); that stretch reads TCGSSALQGQ. Residues 79–104 are a coiled coil; that stretch reads ESQVLDSLETVVEKATERMAAMKTEA. Disordered stretches follow at residues 329–395, 509–541, and 565–613; these read CRDG…AQVA, RQAS…QATE, and MSAC…EDGV. Phosphoserine is present on S386. The span at 512–539 shows a compositional bias: polar residues; that stretch reads SRLSTSHCSTETPSVQQEPATHTAQDQA. Basic and acidic residues predominate over residues 577–589; the sequence is KSKDMDNEGRDKA. The segment covering 590-613 has biased composition (acidic residues); the sequence is EIEDEDEDEFKDEDQDEDKDEDGV.

It is found in the cytoplasm. It localises to the cytoskeleton. Its subcellular location is the microtubule organizing center. The protein localises to the centrosome. The sequence is that of Coiled-coil domain-containing protein 116 (CCDC116) from Homo sapiens (Human).